A 149-amino-acid polypeptide reads, in one-letter code: Large ribosomal subunit protein uL15 (149 aa).

Residues 1–11 show a composition bias toward basic and acidic residues; sequence MSDPIKLHDLR. Residues 1 to 44 form a disordered region; it reads MSDPIKLHDLRPAPGAKKAKTRVGRGEASKGKTAGRGTKGTKAR.

This sequence belongs to the universal ribosomal protein uL15 family. Part of the 50S ribosomal subunit.

Its function is as follows. Binds to the 23S rRNA. In Corynebacterium jeikeium (strain K411), this protein is Large ribosomal subunit protein uL15.